We begin with the raw amino-acid sequence, 219 residues long: uncharacterized protein (219 aa).

The signal sequence occupies residues 1-22 (MKKRRKICYCNTALLLMILLAG). C23 is lipidated: N-palmitoyl cysteine. C23 is lipidated: S-diacylglycerol cysteine. A disordered region spans residues 26–89 (SKDGEAQQPS…SAEEKSKEDN (64 aa)). Residues 32-42 (QQPSNQASAVQ) are compositionally biased toward polar residues. Residues 43–61 (TDEKHTEPEESTKIRKDEA) show a composition bias toward basic and acidic residues.

It is found in the cell membrane. This is an uncharacterized protein from Bacillus subtilis (strain 168).